We begin with the raw amino-acid sequence, 100 residues long: RxLR effector protein SFI8 (100 aa).

The N-terminal stretch at 1–22 (MRSILYAVLAFAVLARSSAVAA) is a signal peptide. The short motif at 43-57 (RSLRVEAQEVIQSGR) is the RxLR-dEER element. Positions 78 to 82 (KPDIK) match the Calmodulin-binding motif motif.

The protein belongs to the RxLR effector family. Interacts with the host calmodulin.

Its subcellular location is the secreted. It localises to the host nucleus. The protein resides in the host cytoplasm. In terms of biological role, effector that suppresses flg22-induced post-translational MAP kinase activation both tomato and Arabidopsis. The perception of highly conserved pathogen- or microbe-associated molecular patterns (PAMPs/MAMPs), such as flg22, triggers converging signaling pathways recruiting MAP kinase cascades and inducing transcriptional re-programming, yielding a generic antimicrobial response. Associates with calmodulin to interfere with plant defense-associated calcium signaling in hosts. This is RxLR effector protein SFI8 from Phytophthora infestans (strain T30-4) (Potato late blight agent).